Reading from the N-terminus, the 750-residue chain is Phosphoribosylformylglycinamidine synthase subunit PurL (750 aa).

His54 is an active-site residue. ATP-binding residues include Tyr57 and Lys101. Glu103 serves as a coordination point for Mg(2+). Residues 104–107 and Arg126 each bind substrate; that span reads SHNH. His105 functions as the Proton acceptor in the catalytic mechanism. A Mg(2+)-binding site is contributed by Asp127. Gln251 is a substrate binding site. Asp279 contributes to the Mg(2+) binding site. 323-325 serves as a coordination point for substrate; it reads ESQ. Asp509 and Gly546 together coordinate ATP. Asn547 provides a ligand contact to Mg(2+). Ser549 contacts substrate.

Belongs to the FGAMS family. In terms of assembly, monomer. Part of the FGAM synthase complex composed of 1 PurL, 1 PurQ and 2 PurS subunits.

It localises to the cytoplasm. It catalyses the reaction N(2)-formyl-N(1)-(5-phospho-beta-D-ribosyl)glycinamide + L-glutamine + ATP + H2O = 2-formamido-N(1)-(5-O-phospho-beta-D-ribosyl)acetamidine + L-glutamate + ADP + phosphate + H(+). It participates in purine metabolism; IMP biosynthesis via de novo pathway; 5-amino-1-(5-phospho-D-ribosyl)imidazole from N(2)-formyl-N(1)-(5-phospho-D-ribosyl)glycinamide: step 1/2. Its function is as follows. Part of the phosphoribosylformylglycinamidine synthase complex involved in the purines biosynthetic pathway. Catalyzes the ATP-dependent conversion of formylglycinamide ribonucleotide (FGAR) and glutamine to yield formylglycinamidine ribonucleotide (FGAM) and glutamate. The FGAM synthase complex is composed of three subunits. PurQ produces an ammonia molecule by converting glutamine to glutamate. PurL transfers the ammonia molecule to FGAR to form FGAM in an ATP-dependent manner. PurS interacts with PurQ and PurL and is thought to assist in the transfer of the ammonia molecule from PurQ to PurL. This Cutibacterium acnes (strain DSM 16379 / KPA171202) (Propionibacterium acnes) protein is Phosphoribosylformylglycinamidine synthase subunit PurL.